Here is a 412-residue protein sequence, read N- to C-terminus: Tyrosine--tRNA ligase (412 aa).

Positions 56-65 match the 'HIGH' region motif; that stretch reads PSAPDVHIGH. Positions 240–244 match the 'KMSKS' region motif; sequence KMSKS. Lys243 is an ATP binding site. The 62-residue stretch at 351-412 folds into the S4 RNA-binding domain; that stretch reads VWIVDLLVTL…GKRKFKKLVR (62 aa).

This sequence belongs to the class-I aminoacyl-tRNA synthetase family. TyrS type 2 subfamily. In terms of assembly, homodimer.

It is found in the cytoplasm. The enzyme catalyses tRNA(Tyr) + L-tyrosine + ATP = L-tyrosyl-tRNA(Tyr) + AMP + diphosphate + H(+). Its function is as follows. Catalyzes the attachment of tyrosine to tRNA(Tyr) in a two-step reaction: tyrosine is first activated by ATP to form Tyr-AMP and then transferred to the acceptor end of tRNA(Tyr). In Halalkalibacterium halodurans (strain ATCC BAA-125 / DSM 18197 / FERM 7344 / JCM 9153 / C-125) (Bacillus halodurans), this protein is Tyrosine--tRNA ligase.